The primary structure comprises 96 residues: Co-chaperonin GroES (96 aa).

The protein belongs to the GroES chaperonin family. As to quaternary structure, heptamer of 7 subunits arranged in a ring. Interacts with the chaperonin GroEL.

Its subcellular location is the cytoplasm. Its function is as follows. Together with the chaperonin GroEL, plays an essential role in assisting protein folding. The GroEL-GroES system forms a nano-cage that allows encapsulation of the non-native substrate proteins and provides a physical environment optimized to promote and accelerate protein folding. GroES binds to the apical surface of the GroEL ring, thereby capping the opening of the GroEL channel. The protein is Co-chaperonin GroES of Hahella chejuensis (strain KCTC 2396).